The following is a 283-amino-acid chain: Pantothenate synthetase (283 aa).

Residue M30 to H37 coordinates ATP. The Proton donor role is filled by H37. Q61 contributes to the (R)-pantoate binding site. Q61 provides a ligand contact to beta-alanine. G147–D150 is a binding site for ATP. A (R)-pantoate-binding site is contributed by Q153. Residues V176 and K184–R187 each bind ATP.

It belongs to the pantothenate synthetase family. Homodimer.

The protein localises to the cytoplasm. It carries out the reaction (R)-pantoate + beta-alanine + ATP = (R)-pantothenate + AMP + diphosphate + H(+). The protein operates within cofactor biosynthesis; (R)-pantothenate biosynthesis; (R)-pantothenate from (R)-pantoate and beta-alanine: step 1/1. Its function is as follows. Catalyzes the condensation of pantoate with beta-alanine in an ATP-dependent reaction via a pantoyl-adenylate intermediate. This chain is Pantothenate synthetase, found in Halalkalibacterium halodurans (strain ATCC BAA-125 / DSM 18197 / FERM 7344 / JCM 9153 / C-125) (Bacillus halodurans).